A 365-amino-acid chain; its full sequence is Peptide chain release factor 2 (365 aa).

Q252 is subject to N5-methylglutamine.

This sequence belongs to the prokaryotic/mitochondrial release factor family. Post-translationally, methylated by PrmC. Methylation increases the termination efficiency of RF2.

It localises to the cytoplasm. Its function is as follows. Peptide chain release factor 2 directs the termination of translation in response to the peptide chain termination codons UGA and UAA. This chain is Peptide chain release factor 2, found in Shewanella woodyi (strain ATCC 51908 / MS32).